A 271-amino-acid chain; its full sequence is Dihydropteroate synthase type-2 (271 aa).

The Pterin-binding domain occupies 1-259; it reads MNKSLIIFGI…EPRPLRDGLA (259 aa). A 4-aminobenzoate-binding site is contributed by asparagine 12. Diphosphate contacts are provided by asparagine 12, phenylalanine 18, serine 51, and serine 52. Asparagine 12 contributes to the Mg(2+) binding site. Positions 52, 85, 104, 174, 179, 213, and 214 each coordinate 7,8-dihydropteroate. (7,8-dihydropterin-6-yl)methyl diphosphate-binding residues include aspartate 85, asparagine 104, and aspartate 174. Residues asparagine 104 and aspartate 174 each coordinate 6-hydroxymethyl-7,8-dihydropterin. Position 213 (lysine 213) interacts with (7,8-dihydropterin-6-yl)methyl diphosphate. Lysine 213 is a 6-hydroxymethyl-7,8-dihydropterin binding site. Arginine 247 contributes to the 4-aminobenzoate binding site. Residues arginine 247 and histidine 249 each contribute to the diphosphate site. 247–249 serves as a coordination point for (7,8-dihydropterin-6-yl)methyl diphosphate; it reads RTH.

This sequence belongs to the DHPS family. In terms of assembly, homodimer. Mg(2+) is required as a cofactor.

It catalyses the reaction (7,8-dihydropterin-6-yl)methyl diphosphate + 4-aminobenzoate = 7,8-dihydropteroate + diphosphate. Its pathway is cofactor biosynthesis; tetrahydrofolate biosynthesis; 7,8-dihydrofolate from 2-amino-4-hydroxy-6-hydroxymethyl-7,8-dihydropteridine diphosphate and 4-aminobenzoate: step 1/2. Its function is as follows. Catalyzes the condensation of para-aminobenzoate (pABA) with 6-hydroxymethyl-7,8-dihydropterin diphosphate (DHPt-PP) to form 7,8-dihydropteroate (H2Pte), the immediate precursor of folate derivatives. Confers resistance to sulfonamide antibiotics, including sulfamethoxazole (SMX), sulfadiazine and sulfisoxazole. The type II enzyme is stable whereas type I DHPS loses its activity rapidly. The sequence is that of Dihydropteroate synthase type-2 from Escherichia coli.